Consider the following 704-residue polypeptide: Phosphatidylinositol-3,5-bisphosphate 3-phosphatase MTMR8 (704 aa).

The 375-residue stretch at 126–500 (GWKLIDPISD…YNIQFWCGMY (375 aa)) folds into the Myotubularin phosphatase domain. A 1,2-diacyl-sn-glycero-3-phospho-(1D-myo-inositol-3,5-bisphosphate)-binding residues include Asn-250, Asn-275, and Ile-276. Residues Asn-250, Asn-275, and Ile-276 each coordinate a 1,2-diacyl-sn-glycero-3-phospho-(1D-myo-inositol-3-phosphate). Cys-338 functions as the Phosphocysteine intermediate in the catalytic mechanism. Residues Ser-339, Asp-340, Gly-341, Trp-342, Asp-343, Arg-344, Lys-380, and Arg-384 each coordinate a 1,2-diacyl-sn-glycero-3-phospho-(1D-myo-inositol-3,5-bisphosphate). Residues Ser-339, Asp-340, Gly-341, Trp-342, Asp-343, and Arg-344 each coordinate a 1,2-diacyl-sn-glycero-3-phospho-(1D-myo-inositol-3-phosphate). Ser-339 and Asp-340 together coordinate phosphate. Phosphate is bound by residues Trp-342, Asp-343, and Arg-344. Residue Arg-384 participates in a 1,2-diacyl-sn-glycero-3-phospho-(1D-myo-inositol-3-phosphate) binding. A coiled-coil region spans residues 515–541 (ESLLEIKKQRAMLETDVHELEKKLKVR).

This sequence belongs to the protein-tyrosine phosphatase family. Non-receptor class myotubularin subfamily. Homodimer. Heterodimer with MTMR9.

The protein localises to the nucleus envelope. It catalyses the reaction a 1,2-diacyl-sn-glycero-3-phospho-(1D-myo-inositol-3,5-bisphosphate) + H2O = a 1,2-diacyl-sn-glycero-3-phospho-(1D-myo-inositol-5-phosphate) + phosphate. It carries out the reaction a 1,2-diacyl-sn-glycero-3-phospho-(1D-myo-inositol-3-phosphate) + H2O = a 1,2-diacyl-sn-glycero-3-phospho-(1D-myo-inositol) + phosphate. The enzyme catalyses 1,2-dioctanoyl-sn-glycero-3-phospho-(1D-myo-inositol-3,5-bisphosphate) + H2O = 1,2-dioctanoyl-sn-glycero-3-phospho-(1D-myo-inositol-5-phosphate) + phosphate. Interaction with MTMR9 increases phosphatase activity. In terms of biological role, lipid phosphatase that specifically dephosphorylates the D-3 position of phosphatidylinositol 3-phosphate and phosphatidylinositol 3,5-bisphosphate, generating phosphatidylinositol and phosphatidylinositol 5-phosphate. In complex with MTMR9, negatively regulates autophagy. In Homo sapiens (Human), this protein is Phosphatidylinositol-3,5-bisphosphate 3-phosphatase MTMR8.